A 348-amino-acid chain; its full sequence is Dihydroorotase (348 aa).

Zn(2+)-binding residues include His-17 and His-19. Residues 19-21 and Asn-45 contribute to the substrate site; that span reads HLR. Zn(2+)-binding residues include Lys-103, His-140, and His-178. At Lys-103 the chain carries N6-carboxylysine. His-140 serves as a coordination point for substrate. Position 223 (Leu-223) interacts with substrate. Asp-251 is a binding site for Zn(2+). Residue Asp-251 is part of the active site. His-255 and Ala-267 together coordinate substrate.

It belongs to the metallo-dependent hydrolases superfamily. DHOase family. Class II DHOase subfamily. In terms of assembly, homodimer. Zn(2+) serves as cofactor.

It carries out the reaction (S)-dihydroorotate + H2O = N-carbamoyl-L-aspartate + H(+). Its pathway is pyrimidine metabolism; UMP biosynthesis via de novo pathway; (S)-dihydroorotate from bicarbonate: step 3/3. Functionally, catalyzes the reversible cyclization of carbamoyl aspartate to dihydroorotate. This chain is Dihydroorotase, found in Escherichia coli (strain SMS-3-5 / SECEC).